Here is a 309-residue protein sequence, read N- to C-terminus: MDYNLSDHYALMCHSAPLEFDPSDPEVDLVNQEFDEDDYTDLDVNLLSDDLSYLNLLATRIKNSPEDTAEIFDSFDIPLPFAELLDQEIGDEWCEIHNFADLRIVENENEFEFVSSHITRHLLIVLNSNPNILWTSTCLLAKLSLIQHVENFDVINYWEAMNRRWELITDELKIGFVFRAFNLKGNQFEVIMKLLGDSLLYPGINVIGKLSMVPMFTVHSIPAYLDHWFRTDDFQRCKFLSFIRFGEITVPKWKKVVVQFYLRQVFSRVRTKVLIANTDVDYWYSLFMRTLVFKSMLSTKNMIKKILNS.

This chain is Probable non-structural 36.3 kDa protein (S6), found in Avena sativa (Oat).